A 73-amino-acid chain; its full sequence is Large ribosomal subunit protein bL31 (73 aa).

The protein belongs to the bacterial ribosomal protein bL31 family. Type A subfamily. In terms of assembly, part of the 50S ribosomal subunit.

Binds the 23S rRNA. The polypeptide is Large ribosomal subunit protein bL31 (rpmE) (Jannaschia sp. (strain CCS1)).